The chain runs to 267 residues: Shikimate dehydrogenase (NADP(+)) (267 aa).

Residues 14 to 16 (SLS) and Thr61 each bind shikimate. The active-site Proton acceptor is Lys65. Shikimate-binding residues include Asn86 and Asp101. Residues 126-130 (GAGGA), 150-155 (NRTHSK), and Leu213 contribute to the NADP(+) site. Residue Tyr215 participates in shikimate binding. Gly236 lines the NADP(+) pocket.

It belongs to the shikimate dehydrogenase family. Homodimer.

The catalysed reaction is shikimate + NADP(+) = 3-dehydroshikimate + NADPH + H(+). It functions in the pathway metabolic intermediate biosynthesis; chorismate biosynthesis; chorismate from D-erythrose 4-phosphate and phosphoenolpyruvate: step 4/7. Its function is as follows. Involved in the biosynthesis of the chorismate, which leads to the biosynthesis of aromatic amino acids. Catalyzes the reversible NADPH linked reduction of 3-dehydroshikimate (DHSA) to yield shikimate (SA). The chain is Shikimate dehydrogenase (NADP(+)) from Vesicomyosocius okutanii subsp. Calyptogena okutanii (strain HA).